The chain runs to 330 residues: MSRKEELYDITIIGGGPTGLFAAFYGGMRQAKVKIIESMPQLGGQLAALYPEKYIYDVAGFPKVKAQDLVNDLKRQAEQFNPTIALEQSVQNVTKETDDTFTIKTDKETHYSKAIIITAGAGAFQPRRLEVEGAKQYEGKNLQYFVNDLNAYAGKNVLISGGGDSAVDWALMLEPVAKNVTLIHRRDKFRAHEHSVELLQKSSVNILTPFAISELSGDGEKIHHVTIQEVKGDAVETLDVDEVIVNFGFVSSLGPIKGWGLEIEKNSIVVNTKMETNIPGIYAAGDICTYPGKVKLIATGFGEAPTAVNNAKAFIDPTARVFPGHSTSLF.

FAD is bound by residues threonine 18, glutamate 37, glutamine 45, tyrosine 50, valine 90, phenylalanine 124, aspartate 286, and threonine 327.

Belongs to the ferredoxin--NADP reductase type 2 family. In terms of assembly, homodimer. Requires FAD as cofactor.

It carries out the reaction 2 reduced [2Fe-2S]-[ferredoxin] + NADP(+) + H(+) = 2 oxidized [2Fe-2S]-[ferredoxin] + NADPH. The protein is Ferredoxin--NADP reductase of Halalkalibacterium halodurans (strain ATCC BAA-125 / DSM 18197 / FERM 7344 / JCM 9153 / C-125) (Bacillus halodurans).